The sequence spans 128 residues: Calcitonin gene-related peptide 1 (128 aa).

The N-terminal stretch at 1–25 (MGFLKFSPFLVVSILLLYQACSLQA) is a signal peptide. A propeptide spanning residues 26–80 (VPLRSILESSPGMATLSEEEVRLLAALVQDYMQMKARELEQEEEQEAEGSSVTAQ) is cleaved from the precursor. A disulfide bond links Cys84 and Cys89. Position 119 is a phenylalanine amide (Phe119). Residues 125-128 (DLQA) constitute a propeptide that is removed on maturation.

It belongs to the calcitonin family. Detected in nerve cells of cerebrum, hippocampus and pons/midbrain in newborns, and only in nerve cells of pons/midbrain in adult.

It is found in the secreted. CGRP1/CALCA is a peptide hormone that induces vasodilation mediated by the CALCRL-RAMP1 receptor complex. Dilates a variety of vessels including the coronary, cerebral and systemic vasculature. Its abundance in the CNS also points toward a neurotransmitter or neuromodulator role. It also elevates platelet cAMP. CGRP1 can also bind and activate CALCR-RAMP1 (AMYR1) receptor complex. This is Calcitonin gene-related peptide 1 from Mus musculus (Mouse).